The chain runs to 415 residues: Putative transcription factor BOFH (415 aa).

A disordered region spans residues Ser-159–Asp-221. The segment covering Ile-174–Trp-183 has biased composition (gly residues). Positions Gln-193 to Leu-202 are enriched in basic residues. A compositionally biased stretch (acidic residues) spans Glu-206–Met-220. 3 DNA-binding regions span residues Arg-234–Phe-238, Asn-303–Tyr-310, and Tyr-374–Thr-377.

The protein belongs to the FLO/LFY family. Acts in the floral primordia.

The protein resides in the nucleus. In terms of biological role, controls floral meristem identity. Is required very early in flower development and may act here as a transcription factor. In Brassica oleracea var. botrytis (Cauliflower), this protein is Putative transcription factor BOFH.